A 253-amino-acid polypeptide reads, in one-letter code: tRNA 2'-phosphotransferase 1 (253 aa).

Position 1 is an N-acetylmethionine (Met1). 2 disordered regions span residues 1–29 and 225–253; these read MNFSGGGRQEAAGSRGRRAPRPREQDRDV and KPLSLAGDEETECQSSPKHSSRERRRIQQ. Ser240 is modified (phosphoserine). Positions 243-253 are enriched in basic residues; that stretch reads HSSRERRRIQQ.

Belongs to the KptA/TPT1 family. Widely expressed. Weakly or not expressed in lung, spleen, small intestine and peripheral blood leukocytes.

The enzyme catalyses 2'-phospho-[ligated tRNA] + NAD(+) = mature tRNA + ADP-alpha-D-ribose 1'',2''-cyclic phosphate + nicotinamide. Functionally, catalyzes the last step of tRNA splicing, the transfer of the splice junction 2'-phosphate from ligated tRNA to NAD to produce ADP-ribose 1''-2'' cyclic phosphate. The chain is tRNA 2'-phosphotransferase 1 (TRPT1) from Homo sapiens (Human).